The primary structure comprises 110 residues: UPF0122 protein lwe1821 (110 aa).

Belongs to the UPF0122 family.

Its function is as follows. Might take part in the signal recognition particle (SRP) pathway. This is inferred from the conservation of its genetic proximity to ftsY/ffh. May be a regulatory protein. The protein is UPF0122 protein lwe1821 of Listeria welshimeri serovar 6b (strain ATCC 35897 / DSM 20650 / CCUG 15529 / CIP 8149 / NCTC 11857 / SLCC 5334 / V8).